Reading from the N-terminus, the 324-residue chain is Heat-inducible transcription repressor HrcA (324 aa).

Belongs to the HrcA family.

Functionally, negative regulator of class I heat shock genes (grpE-dnaK-dnaJ and groELS operons). Prevents heat-shock induction of these operons. This chain is Heat-inducible transcription repressor HrcA, found in Synechococcus sp. (strain CC9902).